Here is a 220-residue protein sequence, read N- to C-terminus: Aspartic protease inhibitor 8 (220 aa).

The N-terminal stretch at 1 to 23 (MMKCLFLLCLCLLPIVVFSSTFT) is a signal peptide. A propeptide spanning residues 24-32 (SQNLIDLPS) is cleaved from the precursor. 2 disulfides stabilise this stretch: Cys-80/Cys-125 and Cys-174/Cys-185.

This sequence belongs to the protease inhibitor I3 (leguminous Kunitz-type inhibitor) family.

Its subcellular location is the vacuole. Its function is as follows. Inhibitor of cathepsin D (aspartic protease) and trypsin (serine protease). May protect the plant by inhibiting proteases of invading organisms. The protein is Aspartic protease inhibitor 8 of Solanum tuberosum (Potato).